A 408-amino-acid chain; its full sequence is uncharacterized protein (408 aa).

The interval 49-77 (PRSSPEVQRKATAGENSEVGSPESSLSTS) is disordered. Polar residues predominate over residues 62-77 (GENSEVGSPESSLSTS). The 47-residue stretch at 124 to 170 (SFEFMQLPDTDICQIMSFLDAQSLLNLSQTCSHLRQLCLAHEDNAGK) folds into the F-box domain.

This is an uncharacterized protein from Caenorhabditis elegans.